A 155-amino-acid chain; its full sequence is Transmembrane protein C1orf162 (155 aa).

Residues 1 to 28 (MGGNGSTCKPDTERQGTLSTAAPTTSPA) form a disordered region. Over residues 19 to 28 (STAAPTTSPA) the composition is skewed to low complexity. The helical transmembrane segment at 41–61 (ILAFCAGVLLTLLLIAFIFLI) threads the bilayer. The tract at residues 92 to 114 (ADHSKPQAPDPHSDPPAKLSSIP) is disordered. Serine 140 carries the post-translational modification Phosphoserine.

The protein resides in the membrane. This Homo sapiens (Human) protein is Transmembrane protein C1orf162 (C1orf162).